Here is a 524-residue protein sequence, read N- to C-terminus: Indoleacetamide hydrolase (524 aa).

2 stretches are compositionally biased toward basic residues: residues 1 to 26 (MAKKTASKKKSVSRKVTKTSSKKATA) and 34 to 54 (AAKKSVKKAAPRKSATARRPK). Residues 1-56 (MAKKTASKKKSVSRKVTKTSSKKATARKGAVAKAAKKSVKKAAPRKSATARRPKGP) are disordered. Residues Lys-133 and Ser-208 each act as charge relay system in the active site. The Acyl-ester intermediate role is filled by Ser-232.

Belongs to the amidase family.

It functions in the pathway plant hormone metabolism; auxin biosynthesis. In terms of biological role, hydrolyzes indole-3-acetamide (IAM) into indole-3-acetic acid (IAA). The protein is Indoleacetamide hydrolase (bam) of Bradyrhizobium diazoefficiens (strain JCM 10833 / BCRC 13528 / IAM 13628 / NBRC 14792 / USDA 110).